Consider the following 320-residue polypeptide: Adenosine receptor A3 (320 aa).

The Extracellular portion of the chain corresponds to 1–16 (MKANNTTTSALWLQIT). Asn-4 and Asn-5 each carry an N-linked (GlcNAc...) asparagine glycan. Residues 17–39 (YITMEAAIGLCAVVGNMLVIWVV) traverse the membrane as a helical segment. Over 40 to 50 (KLNRTLRTTTF) the chain is Cytoplasmic. Residues 51 to 74 (YFIVSLALADIAVGVLVIPLAIAV) form a helical membrane-spanning segment. Residues 75 to 86 (SLEVQMHFYACL) are Extracellular-facing. Cys-85 and Cys-168 are oxidised to a cystine. A helical transmembrane segment spans residues 87–108 (FMSCVLLVFTHASIMSLLAIAV). Residues 109–128 (DRYLRVKLTVRYRTVTTQRR) are Cytoplasmic-facing. The chain crosses the membrane as a helical span at residues 129–150 (IWLFLGLCWLVSFLVGLTPMFG). Residues 151 to 179 (WNRKVTLELSQNSSTLSCHFRSVVGLDYM) are Extracellular-facing. Residues 180–200 (VFFSFITWILIPLVVMCIIYL) form a helical membrane-spanning segment. The Cytoplasmic segment spans residues 201-233 (DIFYIIRNKLSQNLTGFRETRAFYGREFKTAKS). A helical transmembrane segment spans residues 234–257 (LFLVLFLFALCWLPLSIINFVSYF). Residues 258 to 263 (NVKIPE) lie on the Extracellular side of the membrane. Residues 264–286 (IAMCLGILLSHANSMMNPIVYAC) traverse the membrane as a helical segment. At 287-320 (KIKKFKETYFVILRACRLCQTSDSLDSNLEQTTE) the chain is on the cytoplasmic side. A lipid anchor (S-palmitoyl cysteine) is attached at Cys-305. 3 positions are modified to phosphothreonine: Thr-307, Thr-318, and Thr-319.

The protein belongs to the G-protein coupled receptor 1 family. Phosphorylation on Thr-318 and Thr-319 may be crucial for rapid desensitization. Phosphorylation on Thr-318 may be necessary for phosphorylation on Thr-319 to occur. As to expression, testis, particularly in spermatocytes and spermatids but not in spermatogonia. Low levels in the brain.

It localises to the cell membrane. Functionally, receptor for adenosine. The activity of this receptor is mediated by G proteins which inhibits adenylyl cyclase. May play a role during reproduction. This Rattus norvegicus (Rat) protein is Adenosine receptor A3 (Adora3).